Reading from the N-terminus, the 273-residue chain is Urease accessory protein UreD (273 aa).

The protein belongs to the UreD family. As to quaternary structure, ureD, UreF and UreG form a complex that acts as a GTP-hydrolysis-dependent molecular chaperone, activating the urease apoprotein by helping to assemble the nickel containing metallocenter of UreC. The UreE protein probably delivers the nickel.

It is found in the cytoplasm. Functionally, required for maturation of urease via the functional incorporation of the urease nickel metallocenter. The polypeptide is Urease accessory protein UreD (Bacillus cereus (strain ATCC 10987 / NRS 248)).